A 138-amino-acid chain; its full sequence is Acidic phospholipase A2 CoaPLA2 (138 aa).

A signal peptide spans 1 to 16 (MRTLWIVAVLLLGVEG). Intrachain disulfides connect C42–C131, C44–C60, C59–C111, C65–C138, C66–C104, C73–C97, and C91–C102. Positions 43, 45, and 47 each coordinate Ca(2+). H63 is a catalytic residue. D64 serves as a coordination point for Ca(2+). The active site involves D105.

The protein belongs to the phospholipase A2 family. Group II subfamily. D49 sub-subfamily. As to quaternary structure, homodimer. The cofactor is Ca(2+). Expressed by the venom gland.

Its subcellular location is the secreted. The enzyme catalyses a 1,2-diacyl-sn-glycero-3-phosphocholine + H2O = a 1-acyl-sn-glycero-3-phosphocholine + a fatty acid + H(+). In terms of biological role, snake venom phospholipase A2 (PLA2) that shows very low inhibition of ADP-induced platelet aggregation in platelet-rich plasma of human, rabbit and guinea pig. Shows edema-inducing activity and myotoxicity. PLA2 catalyzes the calcium-dependent hydrolysis of the 2-acyl groups in 3-sn-phosphoglycerides. The polypeptide is Acidic phospholipase A2 CoaPLA2 (Crotalus lutosus abyssus (Grand Canyon rattlesnake)).